The chain runs to 62 residues: Photosystem II reaction center protein Z (62 aa).

Helical transmembrane passes span 8–28 (AVFALIATSSILLISVPVVFA) and 41–61 (FSGTSLWLGLVFLVGILNSLI).

The protein belongs to the PsbZ family. In terms of assembly, PSII is composed of 1 copy each of membrane proteins PsbA, PsbB, PsbC, PsbD, PsbE, PsbF, PsbH, PsbI, PsbJ, PsbK, PsbL, PsbM, PsbT, PsbY, PsbZ, Psb30/Ycf12, at least 3 peripheral proteins of the oxygen-evolving complex and a large number of cofactors. It forms dimeric complexes.

The protein localises to the plastid. It is found in the chloroplast thylakoid membrane. Functionally, may control the interaction of photosystem II (PSII) cores with the light-harvesting antenna, regulates electron flow through the 2 photosystem reaction centers. PSII is a light-driven water plastoquinone oxidoreductase, using light energy to abstract electrons from H(2)O, generating a proton gradient subsequently used for ATP formation. The sequence is that of Photosystem II reaction center protein Z from Spinacia oleracea (Spinach).